A 569-amino-acid chain; its full sequence is Atlastin-2 (569 aa).

The tract at residues 1-49 is N-terminal hypervariable region (HVR); the sequence is MAEGGSLRNRTRFGSRSNEAMNHVDYPDENFVEEIQLNSDTEVMEKPRP. Topologically, residues 1–464 are cytoplasmic; the sequence is MAEGGSLRNR…NIFYAARTPA (464 aa). One can recognise a GB1/RHD3-type G domain in the interval 80 to 324; sequence DLNVVVLSVA…LVPLLLAPEN (245 aa). Residues Arg-93, Lys-94, Gly-95, Lys-96, Ser-97, Phe-98, Gln-163, Arg-232, and Asp-233 each coordinate GDP. Arg-93, Lys-94, Gly-95, Lys-96, Ser-97, and Phe-98 together coordinate GTP. Ser-97 lines the Mg(2+) pocket. GTP-binding residues include Arg-232 and Asp-233. Positions 244-272 form a coiled coil; sequence LEGGNKFLEKRLQVKQNQHEELQNVRKHI. Residues Val-291 and Asn-294 each coordinate GDP. Val-291 is a binding site for GTP. Positions 362 to 453 are 3HB (three-helix bundle) domain; it reads MLQATAEANN…YANFLKHNDG (92 aa). Residues 454 to 462 form a linker region; that stretch reads KNIFYAART. A helical membrane pass occupies residues 465 to 485; it reads TLFAVMFAMYIISGLTGFIGM. Residues 486 to 487 lie on the Lumenal side of the membrane; the sequence is NS. A helical transmembrane segment spans residues 488–508; that stretch reads IATICNLIMGLTLLSFCTWAY. Over 509-569 the chain is Cytoplasmic; that stretch reads VKYSGEFREL…DQVSGRLKTN (61 aa). Residues 535-569 are autoinhibitory domain; sequence KPLSDNLMEDNIRQTVRNSIKAGLTDQVSGRLKTN.

Belongs to the TRAFAC class dynamin-like GTPase superfamily. GB1/RHD3 GTPase family. GB1 subfamily. As to quaternary structure, monomeric and homodimeric. The homodimer, transiently formed by two molecules on opposing membranes, is the active form mediating ER membrane fusion.

It is found in the endoplasmic reticulum membrane. The catalysed reaction is GTP + H2O = GDP + phosphate + H(+). Its function is as follows. Atlastin-2 (ATL2) is a membrane-anchored GTPase that mediates the GTP-dependent fusion of endoplasmic reticulum (ER) membranes, maintaining the continuous ER network. It facilitates the formation of three-way junctions where ER tubules intersect. Two atlastin-2 on neighboring ER tubules bind GTP and form loose homodimers through the GB1/RHD3-type G domains and 3HB regions. Upon GTP hydrolysis, the 3HB regions tighten, pulling the membranes together to drive their fusion. After fusion, the homodimer disassembles upon release of inorganic phosphate (Pi). Subsequently, GDP dissociates, resetting the monomers to a conformation ready for a new fusion cycle. The sequence is that of Atlastin-2 (atl2) from Xenopus laevis (African clawed frog).